We begin with the raw amino-acid sequence, 61 residues long: Large ribosomal subunit protein uL29 (61 aa).

It belongs to the universal ribosomal protein uL29 family.

This is Large ribosomal subunit protein uL29 from Nitratidesulfovibrio vulgaris (strain ATCC 29579 / DSM 644 / CCUG 34227 / NCIMB 8303 / VKM B-1760 / Hildenborough) (Desulfovibrio vulgaris).